Here is a 260-residue protein sequence, read N- to C-terminus: Small ribosomal subunit protein cS22 (260 aa).

The N-terminal 62 residues, 1-62 (MATISSILPC…TNPPLLKVRA (62 aa)), are a transit peptide targeting the chloroplast. Residues 63 to 78 (VVTEETSSSSTASSSS) show a composition bias toward low complexity. The tract at residues 63–83 (VVTEETSSSSTASSSSDGEGA) is disordered. RRM domains are found at residues 84–162 (RRLY…ITEK) and 184–260 (YKVY…VNKA).

Component of the chloroplast small ribosomal subunit (SSU). Mature 70S chloroplast ribosomes of higher plants consist of a small (30S) and a large (50S) subunit. The 30S small subunit contains 1 molecule of ribosomal RNA (16S rRNA) and 24 different proteins. The 50S large subunit contains 3 rRNA molecules (23S, 5S and 4.5S rRNA) and 33 different proteins.

The protein resides in the plastid. The protein localises to the chloroplast. Functionally, component of the chloroplast ribosome (chloro-ribosome), a dedicated translation machinery responsible for the synthesis of chloroplast genome-encoded proteins, including proteins of the transcription and translation machinery and components of the photosynthetic apparatus. cS22 may have a role in the recruitment of stored chloroplast mRNAs for active protein synthesis. The polypeptide is Small ribosomal subunit protein cS22 (PSRP2) (Spinacia oleracea (Spinach)).